The following is a 197-amino-acid chain: Glycerol-3-phosphate acyltransferase (197 aa).

Transmembrane regions (helical) follow at residues 5–25, 70–90, 111–131, and 153–173; these read LILI…VGKI, LPVL…AVIG, VMLF…FIVL, and IFFT…AFIF.

The protein belongs to the PlsY family. In terms of assembly, probably interacts with PlsX.

The protein resides in the cell membrane. The enzyme catalyses an acyl phosphate + sn-glycerol 3-phosphate = a 1-acyl-sn-glycero-3-phosphate + phosphate. It participates in lipid metabolism; phospholipid metabolism. Catalyzes the transfer of an acyl group from acyl-phosphate (acyl-PO(4)) to glycerol-3-phosphate (G3P) to form lysophosphatidic acid (LPA). This enzyme utilizes acyl-phosphate as fatty acyl donor, but not acyl-CoA or acyl-ACP. The polypeptide is Glycerol-3-phosphate acyltransferase (Geobacillus sp. (strain WCH70)).